The following is a 155-amino-acid chain: Protein FAM162A (155 aa).

The interval 77 to 103 is required for proapoptotic activity; it reads RFKKEEEIPETISFEMLDAAKNKLRVK. The helical transmembrane segment at 104–121 threads the bilayer; it reads VSYLMIALTVAGCIYMVI.

The protein belongs to the UPF0389 family. As to quaternary structure, interacts with HSP90AB1; HSP90AB1 is essential for FAM162A mitochondrial localization and pro-apoptotic activity. Interacts with VDAC2; the interaction is probably involved in inducing mitochondrial permeability transition.

Its subcellular location is the mitochondrion membrane. Its function is as follows. Proposed to be involved in regulation of apoptosis; the exact mechanism may differ between cell types/tissues. May be involved in hypoxia-induced cell death of transformed cells implicating cytochrome C release and caspase activation (such as CASP9) and inducing mitochondrial permeability transition. May be involved in hypoxia-induced cell death of neuronal cells probably by promoting release of AIFM1 from mitochondria to cytoplasm and its translocation to the nucleus; however, the involvement of caspases has been reported conflictingly. The polypeptide is Protein FAM162A (Fam162a) (Mus musculus (Mouse)).